The primary structure comprises 371 residues: Alanine dehydrogenase (371 aa).

Substrate contacts are provided by R15 and K75. The Proton donor/acceptor role is filled by H96. Residues S134, 178–179, D198, K203, S220, 239–240, 267–270, R279, and 298–301 contribute to the NAD(+) site; these read TA, VL, IAID, and VANM. D270 acts as the Proton donor/acceptor in catalysis. Mg(2+)-binding residues include E323 and H327.

It belongs to the AlaDH/PNT family. As to quaternary structure, homohexamer. Trimer of dimers. Requires Mg(2+) as cofactor.

The protein resides in the secreted. It carries out the reaction L-alanine + NAD(+) + H2O = pyruvate + NH4(+) + NADH + H(+). It functions in the pathway amino-acid degradation; L-alanine degradation via dehydrogenase pathway; NH(3) and pyruvate from L-alanine: step 1/1. With respect to regulation, inhibited by CuSO(4) and ZnCl(2). Its function is as follows. Catalyzes the reversible reductive amination of pyruvate to L-alanine. However, since the physiological environment of M.tuberculosis has a neutral pH, it can be assumed that the enzyme catalyzes exclusively the formation of L-alanine. May play a role in cell wall synthesis as L-alanine is an important constituent of the peptidoglycan layer. This chain is Alanine dehydrogenase (ald), found in Mycobacterium tuberculosis (strain ATCC 25618 / H37Rv).